A 299-amino-acid chain; its full sequence is 4-diphosphocytidyl-2-C-methyl-D-erythritol kinase (299 aa).

Lys-16 is an active-site residue. Residue 101–111 (PVAAGIGGGSA) coordinates ATP. Residue Asp-143 is part of the active site.

It belongs to the GHMP kinase family. IspE subfamily.

It catalyses the reaction 4-CDP-2-C-methyl-D-erythritol + ATP = 4-CDP-2-C-methyl-D-erythritol 2-phosphate + ADP + H(+). It participates in isoprenoid biosynthesis; isopentenyl diphosphate biosynthesis via DXP pathway; isopentenyl diphosphate from 1-deoxy-D-xylulose 5-phosphate: step 3/6. Functionally, catalyzes the phosphorylation of the position 2 hydroxy group of 4-diphosphocytidyl-2C-methyl-D-erythritol. The protein is 4-diphosphocytidyl-2-C-methyl-D-erythritol kinase of Rhodopseudomonas palustris (strain ATCC BAA-98 / CGA009).